The following is a 102-amino-acid chain: Peptide chaperone MftB (102 aa).

This sequence belongs to the peptide chaperone MftB family.

In terms of biological role, peptide chaperone involved in the biosynthesis of the enzyme cofactor mycofactocin (MFT). Binds MftA and MftC with high affinity, and is essential for MftC activity on MftA, likely via the formation of a ternary complex. Is required for the in vivo ethanol assimilation in M.smegmatis. This chain is Peptide chaperone MftB, found in Mycolicibacterium smegmatis (strain ATCC 700084 / mc(2)155) (Mycobacterium smegmatis).